Reading from the N-terminus, the 421-residue chain is Lipid II:glycine glycyltransferase (421 aa).

The protein belongs to the FemABX family. Monomer.

The protein localises to the cytoplasm. It carries out the reaction beta-D-GlcNAc-(1-&gt;4)-Mur2Ac(oyl-L-Ala-D-isoglutaminyl-L-Lys-D-Ala-D-Ala)-di-trans,octa-cis-undecaprenyl diphosphate + glycyl-tRNA(Gly) = beta-D-GlcNAc-(1-&gt;4)-Mur2Ac(oyl-L-Ala-D-isoglutaminyl-L-Lys-(N(6)-Gly)-D-Ala-D-Ala)-di-trans,octa-cis-undecaprenyl diphosphate + tRNA(Gly) + H(+). Functionally, catalyzes the incorporation of the first glycine of the pentaglycine interpeptide bridge, which is characteristic of the S.aureus peptidoglycan. This glycine is added to the epsilon-amino group of the L-lysine of the membrane-bound lipid II intermediate (GlcNAc-(beta-1,4)-N-acetylmuramic acid(-L-Ala-D-iGln-L-Lys-D-Ala-D-Ala)-pyrophosphoryl-undecaprenol), using glycyl-tRNA(Gly) as donor, in a ribosome-independent mechanism. Involved in methicillin resistance. In Staphylococcus aureus (strain Mu50 / ATCC 700699), this protein is Lipid II:glycine glycyltransferase (femX).